Here is a 463-residue protein sequence, read N- to C-terminus: Exodeoxyribonuclease 7 large subunit (463 aa).

Belongs to the XseA family. In terms of assembly, heterooligomer composed of large and small subunits.

The protein localises to the cytoplasm. It carries out the reaction Exonucleolytic cleavage in either 5'- to 3'- or 3'- to 5'-direction to yield nucleoside 5'-phosphates.. In terms of biological role, bidirectionally degrades single-stranded DNA into large acid-insoluble oligonucleotides, which are then degraded further into small acid-soluble oligonucleotides. This chain is Exodeoxyribonuclease 7 large subunit, found in Pseudomonas syringae pv. syringae (strain B728a).